The chain runs to 328 residues: Beta-ketoacyl-[acyl-carrier-protein] synthase III (328 aa).

Residues Cys122 and His255 contribute to the active site. The interval 256–260 (QANVR) is ACP-binding. Residue Asn285 is part of the active site.

Belongs to the thiolase-like superfamily. FabH family. Homodimer.

The protein resides in the cytoplasm. It catalyses the reaction malonyl-[ACP] + acetyl-CoA + H(+) = 3-oxobutanoyl-[ACP] + CO2 + CoA. It functions in the pathway lipid metabolism; fatty acid biosynthesis. Functionally, catalyzes the condensation reaction of fatty acid synthesis by the addition to an acyl acceptor of two carbons from malonyl-ACP. Catalyzes the first condensation reaction which initiates fatty acid synthesis and may therefore play a role in governing the total rate of fatty acid production. Possesses both acetoacetyl-ACP synthase and acetyl transacylase activities. Its substrate specificity determines the biosynthesis of branched-chain and/or straight-chain of fatty acids. This chain is Beta-ketoacyl-[acyl-carrier-protein] synthase III, found in Bordetella petrii (strain ATCC BAA-461 / DSM 12804 / CCUG 43448).